The sequence spans 48 residues: Toxin CSTX-15 (48 aa).

4 disulfides stabilise this stretch: C3–C18, C10–C27, C17–C42, and C29–C40.

This sequence belongs to the neurotoxin 19 (CSTX) family. 12 subfamily. Heterodimer of A and B chains; disulfide-linked. Contains 4 disulfide bonds. Expressed by the venom gland.

The protein resides in the secreted. This is Toxin CSTX-15 from Cupiennius salei (American wandering spider).